The primary structure comprises 292 residues: Malectin (292 aa).

Residues 1 to 28 (MLGAWAVEGTAVALLRLLLLLLPPAIRG) form the signal peptide. Topologically, residues 29–269 (PGLGVAGVAG…TPNPYASDNS (241 aa)) are lumenal. 5 residues coordinate a carbohydrate: Tyr82, Tyr104, Tyr131, Phe132, and Asp201. The segment at 221-265 (LQPHPGLEKKEEEEEEEEYDEGSNLKKQTNKNRVQSGPRTPNPYA) is disordered. Residues 231 to 241 (EEEEEEEEYDE) are compositionally biased toward acidic residues. The segment covering 245–265 (LKKQTNKNRVQSGPRTPNPYA) has biased composition (polar residues). The N-linked (GlcNAc...) asparagine glycan is linked to Asn268. Residues 270-290 (SLMFPILVAFGVFIPTLFCLC) form a helical membrane-spanning segment. Residues 291-292 (RL) lie on the Cytoplasmic side of the membrane.

Belongs to the malectin family. In terms of assembly, interacts with the oligosaccharyltransferase (OST) complex.

It localises to the endoplasmic reticulum membrane. In terms of biological role, carbohydrate-binding protein with a strong ligand preference for Glc2-N-glycan. May play a role in the early steps of protein N-glycosylation. This chain is Malectin, found in Homo sapiens (Human).